The primary structure comprises 468 residues: Mitochondrial adenyl nucleotide antiporter SLC25A23 (468 aa).

The tract at residues 1 to 149 (MRGSPGDAER…DHFLLHSLEN (149 aa)) is regulatory N-terminal domain. The Mitochondrial intermembrane portion of the chain corresponds to 1–188 (MRGSPGDAER…EKLTGMWWKQ (188 aa)). The 36-residue stretch at 9 to 44 (ERRQRWGRLFEELDSNKDGRVDVHELRQGLARLGGG) folds into the EF-hand 1 domain. Ca(2+)-binding residues include D22, N24, D26, R28, and E33. A disordered region spans residues 34-67 (LRQGLARLGGGNPDPGAQQGISSEGDADPDGGLD). The segment covering 58–67 (GDADPDGGLD) has biased composition (acidic residues). EF-hand domains are found at residues 77-112 (EREQ…LGIS) and 113-148 (ISLE…HSLE). The Ca(2+) site is built by D90, N92, D94, H96, and E101. The interval 150-159 (VEDVLYFWKH) is linker region. The tract at residues 165–468 (IGECLTVPDE…MKQALGVTSR (304 aa)) is C-terminal transmembrane transporter domain. Solcar repeat units lie at residues 183 to 269 (GMWW…IKRA), 277 to 362 (LHVQ…LKNW), and 374 to 462 (PGIL…MKQA). Residues 189-206 (LVAGAVAGAVSRTGTAPL) traverse the membrane as a helical segment. The Mitochondrial matrix portion of the chain corresponds to 207-243 (DRLKVFMQVHASKTNRLNILGGLRSMVLEGGIRSLWR). Residues 244–263 (GNGINVLKIAPESAIKFMAY) traverse the membrane as a helical segment. The Mitochondrial intermembrane segment spans residues 264–286 (EQIKRAILGQQETLHVQERFVAG). A helical transmembrane segment spans residues 287–300 (SLAGATAQTIIYPM). The Mitochondrial matrix portion of the chain corresponds to 301–336 (EVLKTRLTLRRTGQYKGLLDCARRILEREGPRAFYR). The helical transmembrane segment at 337-356 (GYLPNVLGIIPYAGIDLAVY) threads the bilayer. The Mitochondrial intermembrane segment spans residues 357 to 379 (ETLKNWWLQQYSHDSADPGILVL). The helical transmembrane segment at 380–397 (LACGTISSTCGQIASYPL) threads the bilayer. Residues 398–436 (ALVRTRMQAQASIEGGPQLSMLGLLRHILSQEGMRGLYR) lie on the Mitochondrial matrix side of the membrane. Residues 437–456 (GIAPNFMKVIPAVSISYVVY) traverse the membrane as a helical segment. Topologically, residues 457-468 (ENMKQALGVTSR) are mitochondrial intermembrane.

This sequence belongs to the mitochondrial carrier (TC 2.A.29) family. In terms of assembly, interacts with MCU. Interacts with MICU1. In terms of tissue distribution, expressed at low levels in most tissues examined, with highest expression in brain, skeletal muscle and pancreas.

The protein resides in the mitochondrion inner membrane. The enzyme catalyses Mg(2+)(out) + phosphate(in) + ATP(out) = Mg(2+)(in) + phosphate(out) + ATP(in). It catalyses the reaction ADP(out) + phosphate(in) + H(+)(out) = ADP(in) + phosphate(out) + H(+)(in). The catalysed reaction is AMP(out) + phosphate(in) = AMP(in) + phosphate(out). It carries out the reaction phosphate(in) + ATP(out) + 2 H(+)(out) = phosphate(out) + ATP(in) + 2 H(+)(in). The enzyme catalyses dADP(in) + ADP(out) = dADP(out) + ADP(in). It catalyses the reaction Mg(2+)(in) + ADP(out) + ATP(in) + H(+)(out) = Mg(2+)(out) + ADP(in) + ATP(out) + H(+)(in). The catalysed reaction is ADP(out) + diphosphate(in) = ADP(in) + diphosphate(out). It carries out the reaction dAMP(in) + ADP(out) + H(+)(out) = dAMP(out) + ADP(in) + H(+)(in). The enzyme catalyses 3'-AMP(in) + ADP(out) + H(+)(out) = 3'-AMP(out) + ADP(in) + H(+)(in). It catalyses the reaction dAMP(out) + phosphate(in) = dAMP(in) + phosphate(out). The catalysed reaction is 3'-AMP(out) + phosphate(in) = 3'-AMP(in) + phosphate(out). It carries out the reaction dADP(out) + phosphate(in) + H(+)(out) = dADP(in) + phosphate(out) + H(+)(in). Activated by an increase in cytosolic calcium levels that induce a conformational change of the N-terminal regulatory domain, uncapping the channel and allowing transport. Inhibited by bathophenanthroline, mersalyl, p-hydroxymercuribenzoate, bromcresol purple, tannic acid, pyridoxal 5'-phosphate and p-hydroxymercuribenzoate. Its function is as follows. Electroneutral antiporter that mediates the transport of adenine nucleotides through the inner mitochondrial membrane. Originally identified as an ATP-magnesium/inorganic phosphate antiporter, it also acts as a broad specificity adenyl nucleotide antiporter. By regulating the mitochondrial matrix adenine nucleotide pool could adapt to changing cellular energetic demands and indirectly regulate adenine nucleotide-dependent metabolic pathways. Also acts as a regulator of mitochondrial calcium uptake and can probably transport trace amounts of other divalent metal cations in complex with ATP. In vitro, a low activity is also observed with guanyl and pyrimidine nucleotides. The protein is Mitochondrial adenyl nucleotide antiporter SLC25A23 of Homo sapiens (Human).